The sequence spans 507 residues: Histidine ammonia-lyase (507 aa).

The segment at residues 141–143 (ASG) is a cross-link (5-imidazolinone (Ala-Gly)). Position 142 is a 2,3-didehydroalanine (Ser) (serine 142).

This sequence belongs to the PAL/histidase family. In terms of processing, contains an active site 4-methylidene-imidazol-5-one (MIO), which is formed autocatalytically by cyclization and dehydration of residues Ala-Ser-Gly.

The protein resides in the cytoplasm. The enzyme catalyses L-histidine = trans-urocanate + NH4(+). Its pathway is amino-acid degradation; L-histidine degradation into L-glutamate; N-formimidoyl-L-glutamate from L-histidine: step 1/3. In Burkholderia vietnamiensis (strain G4 / LMG 22486) (Burkholderia cepacia (strain R1808)), this protein is Histidine ammonia-lyase.